A 262-amino-acid chain; its full sequence is Hydroxyethylthiazole kinase (262 aa).

Met-43 is a substrate binding site. ATP contacts are provided by Arg-118 and Thr-164. Ala-191 serves as a coordination point for substrate.

It belongs to the Thz kinase family. Requires Mg(2+) as cofactor.

The enzyme catalyses 5-(2-hydroxyethyl)-4-methylthiazole + ATP = 4-methyl-5-(2-phosphooxyethyl)-thiazole + ADP + H(+). Its pathway is cofactor biosynthesis; thiamine diphosphate biosynthesis; 4-methyl-5-(2-phosphoethyl)-thiazole from 5-(2-hydroxyethyl)-4-methylthiazole: step 1/1. Its function is as follows. Catalyzes the phosphorylation of the hydroxyl group of 4-methyl-5-beta-hydroxyethylthiazole (THZ). In Cereibacter sphaeroides (strain ATCC 17025 / ATH 2.4.3) (Rhodobacter sphaeroides), this protein is Hydroxyethylthiazole kinase.